Here is a 715-residue protein sequence, read N- to C-terminus: Tegument protein UL46 (715 aa).

3 disordered regions span residues tryptophan 432–glutamine 513, aspartate 585–glutamate 605, and glycine 659–valine 680. The segment covering glycine 444–valine 455 has biased composition (gly residues). 2 stretches are compositionally biased toward low complexity: residues glycine 456–alanine 467 and proline 475–alanine 488. The segment covering serine 664–proline 677 has biased composition (pro residues).

Belongs to the herpesviridae HHV-1 VP11/12 protein family. As to quaternary structure, interacts with VP16. Interacts with host LCK, PIK3R1, SHC1 AND GRB2; these interactions promote the activation of the PI3K/AKT pathway. Interacts with host YWHAB. Interacts with ICP0; this interaction targets UL46 for degradation by the proteasome. Phosphorylated by host LCK. The phosphorylation seems to be lymphocyte-specific.

Its subcellular location is the virion tegument. The protein localises to the host cell membrane. Its function is as follows. Plays a role in the activation of the host PI3K/AKT pathway to promote cell survival. Interacts with and activates host LCK and thereby recruits downstream partners SHC1, GRB2 and PI3KR1 in order to activate the PI3K pathway by phosphorylating host AKT on its activating residues. This mechanism is inhibited by the viral protein US3 that instead promotes incorporation of UL46 into virions. The chain is Tegument protein UL46 from Human herpesvirus 1 (strain F) (HHV-1).